We begin with the raw amino-acid sequence, 44 residues long: Photosystem I reaction center subunit IX (44 aa).

The chain crosses the membrane as a helical span at residues 7-27; the sequence is YLSTAPVLATLWFGSLAGLLI.

Belongs to the PsaJ family.

It localises to the plastid. The protein localises to the chloroplast thylakoid membrane. Functionally, may help in the organization of the PsaE and PsaF subunits. The chain is Photosystem I reaction center subunit IX from Cycas taitungensis (Prince sago).